The following is a 250-amino-acid chain: 5'-nucleotidase SurE (250 aa).

A divalent metal cation-binding residues include aspartate 8, aspartate 9, serine 40, and asparagine 95.

This sequence belongs to the SurE nucleotidase family. It depends on a divalent metal cation as a cofactor.

It is found in the cytoplasm. The enzyme catalyses a ribonucleoside 5'-phosphate + H2O = a ribonucleoside + phosphate. In terms of biological role, nucleotidase that shows phosphatase activity on nucleoside 5'-monophosphates. The chain is 5'-nucleotidase SurE from Nitratidesulfovibrio vulgaris (strain ATCC 29579 / DSM 644 / CCUG 34227 / NCIMB 8303 / VKM B-1760 / Hildenborough) (Desulfovibrio vulgaris).